The sequence spans 285 residues: NADPH-dependent 7-cyano-7-deazaguanine reductase (285 aa).

A substrate-binding site is contributed by 91 to 93 (IES). Position 93–94 (93–94 (SK)) interacts with NADPH. The active-site Thioimide intermediate is cysteine 191. The Proton donor role is filled by aspartate 198. 230 to 231 (HE) is a binding site for substrate. 259-260 (RG) contributes to the NADPH binding site.

This sequence belongs to the GTP cyclohydrolase I family. QueF type 2 subfamily. In terms of assembly, homodimer.

It is found in the cytoplasm. It carries out the reaction 7-aminomethyl-7-carbaguanine + 2 NADP(+) = 7-cyano-7-deazaguanine + 2 NADPH + 3 H(+). Its pathway is tRNA modification; tRNA-queuosine biosynthesis. Its function is as follows. Catalyzes the NADPH-dependent reduction of 7-cyano-7-deazaguanine (preQ0) to 7-aminomethyl-7-deazaguanine (preQ1). This chain is NADPH-dependent 7-cyano-7-deazaguanine reductase, found in Legionella pneumophila (strain Corby).